The following is a 367-amino-acid chain: Phosphoribosylaminoimidazole-succinocarboxamide synthase (367 aa).

It belongs to the SAICAR synthetase family.

It catalyses the reaction 5-amino-1-(5-phospho-D-ribosyl)imidazole-4-carboxylate + L-aspartate + ATP = (2S)-2-[5-amino-1-(5-phospho-beta-D-ribosyl)imidazole-4-carboxamido]succinate + ADP + phosphate + 2 H(+). The protein operates within purine metabolism; IMP biosynthesis via de novo pathway; 5-amino-1-(5-phospho-D-ribosyl)imidazole-4-carboxamide from 5-amino-1-(5-phospho-D-ribosyl)imidazole-4-carboxylate: step 1/2. This is Phosphoribosylaminoimidazole-succinocarboxamide synthase from Aliivibrio salmonicida (strain LFI1238) (Vibrio salmonicida (strain LFI1238)).